A 258-amino-acid polypeptide reads, in one-letter code: MILDKIFEKTKEDLKERKLKLPYDMLGRSLASNPFFPKDVIKALKRVEKEVKIIAEVKKASPSKGVIREDFDPLSIALNYEKNKAAAISVLTEPHFFKGSLEYLSLIRRYTQIPLLRKDFIFDEYQILEALVYGADFVLLIAKMLSMKELKKLLEFARHLGLEALVEIHDKEDLSKAIFAGADIIGINHRNLEDFTMDMSLCEKLIPQIPNSKIIIAESGLENKEFLEHLQNLGVDAFLIGEYFMREKDEGKALKALL.

Belongs to the TrpC family.

The catalysed reaction is 1-(2-carboxyphenylamino)-1-deoxy-D-ribulose 5-phosphate + H(+) = (1S,2R)-1-C-(indol-3-yl)glycerol 3-phosphate + CO2 + H2O. Its pathway is amino-acid biosynthesis; L-tryptophan biosynthesis; L-tryptophan from chorismate: step 4/5. The polypeptide is Indole-3-glycerol phosphate synthase (Campylobacter jejuni (strain RM1221)).